The following is a 627-amino-acid chain: Altered inheritance of mitochondria protein 9, mitochondrial (627 aa).

Residues 1–43 constitute a mitochondrion transit peptide; sequence MIRYTVAGHSRRCVVGASKRVGAIKCITVAATKRFISNKSNEV.

It belongs to the AIM9 family.

It is found in the mitochondrion. The polypeptide is Altered inheritance of mitochondria protein 9, mitochondrial (AIM9) (Saccharomyces cerevisiae (strain JAY291) (Baker's yeast)).